The primary structure comprises 315 residues: Glutathione synthetase (315 aa).

The ATP-grasp domain occupies 125-310; that stretch reads KLFTAWFSDL…ITGMLMDAIE (186 aa). N-beta-linked (GlcNAc) arginine glycosylation occurs at arginine 256. Mg(2+) contacts are provided by glutamate 281 and asparagine 283.

It belongs to the prokaryotic GSH synthase family. Mg(2+) serves as cofactor. It depends on Mn(2+) as a cofactor. Post-translationally, glycosylation at Arg-256 by NleB enhances the glutathione synthetase activity, leading to an increase in glutathione production. Glycosylation may promote C.rodentium survival in oxidative stress conditions.

It carries out the reaction gamma-L-glutamyl-L-cysteine + glycine + ATP = glutathione + ADP + phosphate + H(+). The protein operates within sulfur metabolism; glutathione biosynthesis; glutathione from L-cysteine and L-glutamate: step 2/2. The protein is Glutathione synthetase of Citrobacter rodentium.